The chain runs to 1200 residues: Nuclear envelope pore membrane protein POM 121 (1200 aa).

The disordered stretch occupies residues 1–29 (MSPAAAAADGGERRRPPLGGREGRSRARG). Residues 1–56 (MSPAAAAADGGERRRPPLGGREGRSRARGYGGPAGAAALGLALLGLALYLVPAAAA) are cisternal side. Basic and acidic residues predominate over residues 10-25 (GGERRRPPLGGREGRS). A helical transmembrane segment spans residues 57–77 (LAWLAVGASAAWWGLSREPRG). Residues 76–1200 (RGPRALSSFV…QARRQHTRKK (1125 aa)) are pore side. S83 bears the Phosphoserine mark. Disordered stretches follow at residues 91-167 (HPRP…SAVQ) and 177-196 (PTPLLRPSRRPPHRDCGPLS). A compositionally biased stretch (basic and acidic residues) spans 143–152 (LRQDPRERPG). S244 is subject to Phosphoserine. 7 disordered regions span residues 294-328 (KKKRTVAEEDQLHLDGQENKRRRHDSGGSGHSAFE), 345-509 (SLKR…ITAE), 530-627 (PDDA…SDSK), 640-692 (SITP…LATP), 706-744 (PATPKSESDSPLPSSSSAATTASSSTAPPTAASTTPTFK), 1075-1151 (TSGT…SSLS), and 1173-1200 (PSFSIGAGSKTPGARQRLQARRQHTRKK). The segment covering 298-312 (TVAEEDQLHLDGQEN) has biased composition (basic and acidic residues). S319, S322, S325, S345, S355, S367, and S370 each carry phosphoserine. The segment covering 365-374 (TSSVSSLASA) has biased composition (low complexity). Positions 379 to 397 (IPSSSRNAITSSYSSTRGI) are enriched in polar residues. Residues 404-419 (SGPTSSPFSSPASSRS) show a composition bias toward low complexity. Phosphoserine is present on residues S408, S409, S412, S413, S416, and S417. Composition is skewed to basic and acidic residues over residues 424-433 (RPAKKTREEE) and 446-456 (TDKESPGEKVT). Low complexity-rich tracts occupy residues 463–477 (QQSSWTSPPTPGSSG), 546–574 (PPFTFTLPAVGPAASPASLPAPSSNPLLE), 581–598 (ESPAPSSSEPAEAATVAA), and 605–621 (PSLLAPLVSPLAGPLAS). Positions 640-657 (SITPLTDSKSSGVSQAEQ) are enriched in polar residues. Composition is skewed to low complexity over residues 658–669 (SVSTPASTASSP), 681–692 (SPPASSSSLATP), 715–742 (SPLPSSSSAATTASSSTAPPTAASTTPT), and 1075–1099 (TSGTFSFGSGQSGTPGTTTSFGSLS). A compositionally biased stretch (polar residues) spans 1100-1121 (QNTLGAPSQGSPFAFSVGSTPE). The segment covering 1190 to 1200 (LQARRQHTRKK) has biased composition (basic residues).

The protein belongs to the POM121 family. Post-translationally, proteolytically cleaved by caspase-3 during apoptosis.

The protein localises to the nucleus. Its subcellular location is the nuclear pore complex. The protein resides in the nucleus membrane. It localises to the endoplasmic reticulum membrane. Functionally, essential component of the nuclear pore complex (NPC). The repeat-containing domain may be involved in anchoring components of the pore complex to the pore membrane. When overexpressed in cells induces the formation of cytoplasmic annulate lamellae (AL). This chain is Nuclear envelope pore membrane protein POM 121 (Pom121), found in Mus musculus (Mouse).